Consider the following 849-residue polypeptide: Probable ubiquitin carboxyl-terminal hydrolase 1 (849 aa).

The DUSP domain maps to 20-120; it reads QPASLPFQDS…EGLAIERKVL (101 aa). The region spanning 279–848 is the USP domain; the sequence is CGLYNLGNSC…SAYVLFYRAK (570 aa). C288 (nucleophile) is an active-site residue. H806 functions as the Proton acceptor in the catalytic mechanism.

The protein belongs to the peptidase C19 family.

The enzyme catalyses Thiol-dependent hydrolysis of ester, thioester, amide, peptide and isopeptide bonds formed by the C-terminal Gly of ubiquitin (a 76-residue protein attached to proteins as an intracellular targeting signal).. The polypeptide is Probable ubiquitin carboxyl-terminal hydrolase 1 (ubp1) (Schizosaccharomyces pombe (strain 972 / ATCC 24843) (Fission yeast)).